The primary structure comprises 146 residues: Nitric oxide reductase subunit C (146 aa).

Residues Ile-13–Thr-29 form a helical; Signal-anchor membrane-spanning segment. Cys-61, Cys-64, and His-65 together coordinate heme c.

Heterodimer of cytochromes b (large subunit) and c (small subunit).

It is found in the cell membrane. Component of the anaerobic respiratory chain that transforms nitrate to dinitrogen (denitrification). This chain is Nitric oxide reductase subunit C (norC), found in Stutzerimonas stutzeri (Pseudomonas stutzeri).